Consider the following 362-residue polypeptide: Phosphoserine aminotransferase (362 aa).

Residues Ser-9 and Arg-42 each coordinate L-glutamate. Pyridoxal 5'-phosphate contacts are provided by residues 76–77, Trp-102, Thr-153, Asp-174, and Gln-197; that span reads AR. Lys-198 bears the N6-(pyridoxal phosphate)lysine mark. Residue 239-240 participates in pyridoxal 5'-phosphate binding; it reads NT.

This sequence belongs to the class-V pyridoxal-phosphate-dependent aminotransferase family. SerC subfamily. Homodimer. Pyridoxal 5'-phosphate is required as a cofactor.

It localises to the cytoplasm. The enzyme catalyses O-phospho-L-serine + 2-oxoglutarate = 3-phosphooxypyruvate + L-glutamate. The catalysed reaction is 4-(phosphooxy)-L-threonine + 2-oxoglutarate = (R)-3-hydroxy-2-oxo-4-phosphooxybutanoate + L-glutamate. It participates in amino-acid biosynthesis; L-serine biosynthesis; L-serine from 3-phospho-D-glycerate: step 2/3. Its pathway is cofactor biosynthesis; pyridoxine 5'-phosphate biosynthesis; pyridoxine 5'-phosphate from D-erythrose 4-phosphate: step 3/5. Functionally, catalyzes the reversible conversion of 3-phosphohydroxypyruvate to phosphoserine and of 3-hydroxy-2-oxo-4-phosphonooxybutanoate to phosphohydroxythreonine. This Photorhabdus laumondii subsp. laumondii (strain DSM 15139 / CIP 105565 / TT01) (Photorhabdus luminescens subsp. laumondii) protein is Phosphoserine aminotransferase.